Consider the following 138-residue polypeptide: Large ribosomal subunit protein bL19 (138 aa).

This sequence belongs to the bacterial ribosomal protein bL19 family.

Functionally, this protein is located at the 30S-50S ribosomal subunit interface and may play a role in the structure and function of the aminoacyl-tRNA binding site. The sequence is that of Large ribosomal subunit protein bL19 (rplS) from Rickettsia prowazekii (strain Madrid E).